A 61-amino-acid polypeptide reads, in one-letter code: Small ribosomal subunit protein bS21 (61 aa).

This sequence belongs to the bacterial ribosomal protein bS21 family.

This Leuconostoc mesenteroides subsp. mesenteroides (strain ATCC 8293 / DSM 20343 / BCRC 11652 / CCM 1803 / JCM 6124 / NCDO 523 / NBRC 100496 / NCIMB 8023 / NCTC 12954 / NRRL B-1118 / 37Y) protein is Small ribosomal subunit protein bS21.